A 51-amino-acid chain; its full sequence is Sperm protamine P1 (51 aa).

Residues 1–13 (MARYRCCRSQSRS) are compositionally biased toward low complexity. The segment at 1–30 (MARYRCCRSQSRSRYYRQRQRSRRRRRRSC) is disordered. The segment covering 14-30 (RYYRQRQRSRRRRRRSC) has biased composition (basic residues). Cysteines 40 and 48 form a disulfide.

Belongs to the protamine P1 family. As to quaternary structure, cross-linked by interchain disulfide bonds around the DNA-helix. Phosphorylated by SRPK1. In terms of tissue distribution, testis.

The protein localises to the nucleus. Its subcellular location is the chromosome. Its function is as follows. Protamines substitute for histones in the chromatin of sperm during the haploid phase of spermatogenesis. They compact sperm DNA into a highly condensed, stable and inactive complex. The protein is Sperm protamine P1 (PRM1) of Homo sapiens (Human).